A 209-amino-acid polypeptide reads, in one-letter code: Ribosomal RNA large subunit methyltransferase E (209 aa).

Positions 63, 65, 83, 99, and 124 each coordinate S-adenosyl-L-methionine. Residue K164 is the Proton acceptor of the active site.

Belongs to the class I-like SAM-binding methyltransferase superfamily. RNA methyltransferase RlmE family.

The protein localises to the cytoplasm. The enzyme catalyses uridine(2552) in 23S rRNA + S-adenosyl-L-methionine = 2'-O-methyluridine(2552) in 23S rRNA + S-adenosyl-L-homocysteine + H(+). In terms of biological role, specifically methylates the uridine in position 2552 of 23S rRNA at the 2'-O position of the ribose in the fully assembled 50S ribosomal subunit. This chain is Ribosomal RNA large subunit methyltransferase E, found in Pseudoalteromonas translucida (strain TAC 125).